The chain runs to 488 residues: Envelope glycoprotein gp62 (488 aa).

The first 20 residues, 1–20, serve as a signal peptide directing secretion; sequence MGKFLATLILFFQFCPLILG. Over 21 to 442 the chain is Extracellular; it reads DYSPSCCTLT…LGLSQWAREA (422 aa). N140 and N222 each carry an N-linked (GlcNAc...) asparagine; by host glycan. The CXXC motif lies at 225–228; sequence CIVC. Disulfide bonds link C225-C228, C225-C401, and C393-C400. Residues N244 and N272 are each glycosylated (N-linked (GlcNAc...) asparagine; by host). A fusion peptide region spans residues 313 to 333; it reads AVPVAVWLVSALAMGAGVAGG. The gly-rich stretch occupies residues 327–339; sequence GAGVAGGITGSMS. Coiled coils occupy residues 340–385 and 397–429; these read LASG…LDLL and QEQC…GWGL. Positions 376-392 are immunosuppression; the sequence is AQNRRGLDLLFWEQGGL. A CX6CC motif is present at residues 393-401; it reads CKALQEQCC. The N-linked (GlcNAc...) asparagine; by host glycan is linked to N404. A helical transmembrane segment spans residues 443 to 463; the sequence is LQTGITLVALLLLVILAGPCI. C462 carries S-palmitoyl cysteine; by host lipidation. The Cytoplasmic portion of the chain corresponds to 464–488; sequence LRQLRHLPSRVRYPHYSLINPESSL.

In terms of assembly, the mature envelope protein (Env) consists of a trimer of SU-TM heterodimers attached by a labile interchain disulfide bond. Post-translationally, specific enzymatic cleavages in vivo yield mature proteins. Envelope glycoproteins are synthesized as an inactive precursor that is N-glycosylated and processed likely by host cell furin or by a furin-like protease in the Golgi to yield the mature SU and TM proteins. The cleavage site between SU and TM requires the minimal sequence [KR]-X-[KR]-R. The CXXC motif is highly conserved across a broad range of retroviral envelope proteins. It is thought to participate in the formation of a labile disulfide bond possibly with the CX6CC motif present in the transmembrane protein. Isomerization of the intersubunit disulfide bond to an SU intrachain disulfide bond is thought to occur upon receptor recognition in order to allow membrane fusion. In terms of processing, the transmembrane protein is palmitoylated.

The protein resides in the virion membrane. Its subcellular location is the host cell membrane. Functionally, the surface protein (SU) attaches the virus to the host cell by binding to its receptor. This interaction triggers the refolding of the transmembrane protein (TM) and is thought to activate its fusogenic potential by unmasking its fusion peptide. Fusion occurs at the host cell plasma membrane. Its function is as follows. The transmembrane protein (TM) acts as a class I viral fusion protein. Under the current model, the protein has at least 3 conformational states: pre-fusion native state, pre-hairpin intermediate state, and post-fusion hairpin state. During viral and target cell membrane fusion, the coiled coil regions (heptad repeats) assume a trimer-of-hairpins structure, positioning the fusion peptide in close proximity to the C-terminal region of the ectodomain. The formation of this structure appears to drive apposition and subsequent fusion of viral and target cell membranes. Membranes fusion leads to delivery of the nucleocapsid into the cytoplasm. This Human T-cell leukemia virus 1 (strain Japan MT-2 subtype A) (HTLV-1) protein is Envelope glycoprotein gp62 (env).